A 475-amino-acid chain; its full sequence is Aspartyl/glutamyl-tRNA(Asn/Gln) amidotransferase subunit B (475 aa).

Belongs to the GatB/GatE family. GatB subfamily. As to quaternary structure, heterotrimer of A, B and C subunits.

It catalyses the reaction L-glutamyl-tRNA(Gln) + L-glutamine + ATP + H2O = L-glutaminyl-tRNA(Gln) + L-glutamate + ADP + phosphate + H(+). It carries out the reaction L-aspartyl-tRNA(Asn) + L-glutamine + ATP + H2O = L-asparaginyl-tRNA(Asn) + L-glutamate + ADP + phosphate + 2 H(+). Functionally, allows the formation of correctly charged Asn-tRNA(Asn) or Gln-tRNA(Gln) through the transamidation of misacylated Asp-tRNA(Asn) or Glu-tRNA(Gln) in organisms which lack either or both of asparaginyl-tRNA or glutaminyl-tRNA synthetases. The reaction takes place in the presence of glutamine and ATP through an activated phospho-Asp-tRNA(Asn) or phospho-Glu-tRNA(Gln). In Lysinibacillus sphaericus (strain C3-41), this protein is Aspartyl/glutamyl-tRNA(Asn/Gln) amidotransferase subunit B.